Here is a 358-residue protein sequence, read N- to C-terminus: Alanine racemase (358 aa).

Residue Lys35 is the Proton acceptor; specific for D-alanine of the active site. Position 35 is an N6-(pyridoxal phosphate)lysine (Lys35). Position 130 (Arg130) interacts with substrate. The Proton acceptor; specific for L-alanine role is filled by Tyr255. Met303 contacts substrate.

This sequence belongs to the alanine racemase family. Requires pyridoxal 5'-phosphate as cofactor.

It catalyses the reaction L-alanine = D-alanine. It participates in amino-acid biosynthesis; D-alanine biosynthesis; D-alanine from L-alanine: step 1/1. Catalyzes the interconversion of L-alanine and D-alanine. May also act on other amino acids. The protein is Alanine racemase (alr) of Shewanella woodyi (strain ATCC 51908 / MS32).